The following is a 464-amino-acid chain: ATP-dependent protease ATPase subunit HslU (464 aa).

ATP is bound by residues I19, 61-66 (GVGKTE), D277, E342, and R414.

The protein belongs to the ClpX chaperone family. HslU subfamily. As to quaternary structure, a double ring-shaped homohexamer of HslV is capped on each side by a ring-shaped HslU homohexamer. The assembly of the HslU/HslV complex is dependent on binding of ATP.

It localises to the cytoplasm. Its function is as follows. ATPase subunit of a proteasome-like degradation complex; this subunit has chaperone activity. The binding of ATP and its subsequent hydrolysis by HslU are essential for unfolding of protein substrates subsequently hydrolyzed by HslV. HslU recognizes the N-terminal part of its protein substrates and unfolds these before they are guided to HslV for hydrolysis. The protein is ATP-dependent protease ATPase subunit HslU of Lactobacillus johnsonii (strain CNCM I-12250 / La1 / NCC 533).